We begin with the raw amino-acid sequence, 240 residues long: Serine protease SplB (240 aa).

Positions M1–A36 are cleaved as a signal peptide. Catalysis depends on charge relay system residues H75, D113, and S193.

It belongs to the peptidase S1B family.

Its subcellular location is the secreted. Serine protease that cleaves specifically after the sequence Trp-Glu-Leu-Gln. In Staphylococcus aureus (strain bovine RF122 / ET3-1), this protein is Serine protease SplB (splB).